We begin with the raw amino-acid sequence, 511 residues long: Aldehyde dehydrogenase 2, mitochondrial (511 aa).

The N-terminal 21 residues, 1-21 (MSKSKTKTDKRNQSSLSRIKL), are a transit peptide targeting the mitochondrion. The disordered stretch occupies residues 72–92 (VSEKSQHDSTEEDITQVSEKS). 274–279 (GSTLVG) contacts NAD(+). Glu-297 serves as the catalytic Proton acceptor. The active-site Nucleophile is Cys-331.

This sequence belongs to the aldehyde dehydrogenase family.

It localises to the mitochondrion matrix. It catalyses the reaction an aldehyde + NAD(+) + H2O = a carboxylate + NADH + 2 H(+). Its pathway is alcohol metabolism; ethanol degradation; acetate from ethanol: step 2/2. In Saccharomyces cerevisiae (Baker's yeast), this protein is Aldehyde dehydrogenase 2, mitochondrial (ALD2).